Here is a 468-residue protein sequence, read N- to C-terminus: MKVDFDSLNNIFFVGIKGSGVCSLACFLNSKGYFVEGVDVSDKFHTDKILSNNKISYYENIYEFSLKELGRSFDLIVYSSAYDKYGLPALLEAKELNIPILSYSEVLGELSRKYYSVGIAGSHGKTTTTAFLGLLFNKLGLNPNVIVGSSVKDFGDNSAIAGISNIFIAETCEYKKHFLHFSPNMLILTNIDYEHVDFFENYEALEDAFLQYINNLKKNGILIINSDDNNLLKIKRQINRKDINIFSFGSKDLSNFQISNIVVKNEYFCFSFLGLCNVELRTVLFHNVLNFSAALLALNLFLESNGKSIFDFEEAVKKIAKNYSGIKRRVEVVKEKKGVIYMDDYAHHPREIRDTLLGIKDFYKNKRIILDFMPHTFTRTKEFFNDFVEVLSVADILILHNIYLSNRENFNPDELSVKLFLNIKKINKNTYFFKDVKDSVEFIKSLLISGDLFITMGAGNNFILHDFL.

121-127 is an ATP binding site; sequence GSHGKTT.

The protein belongs to the MurCDEF family.

Its subcellular location is the cytoplasm. It carries out the reaction UDP-N-acetyl-alpha-D-muramate + L-alanine + ATP = UDP-N-acetyl-alpha-D-muramoyl-L-alanine + ADP + phosphate + H(+). Its pathway is cell wall biogenesis; peptidoglycan biosynthesis. In terms of biological role, cell wall formation. The sequence is that of UDP-N-acetylmuramate--L-alanine ligase from Borreliella afzelii (strain PKo) (Borrelia afzelii).